The following is a 78-amino-acid chain: Ferredoxin 7Fe (78 aa).

2 4Fe-4S ferredoxin-type domains span residues 2–29 (AYVI…IHEG) and 31–60 (DQYY…HEDF). [3Fe-4S] cluster-binding residues include C9 and C17. The [4Fe-4S] cluster site is built by C21, C40, C43, and C46. C50 contacts [3Fe-4S] cluster.

As to quaternary structure, monomer. The cofactor is [4Fe-4S] cluster. It depends on [3Fe-4S] cluster as a cofactor.

This Hydrogenibacillus schlegelii (Bacillus schlegelii) protein is Ferredoxin 7Fe (fdxA).